The following is a 213-amino-acid chain: Holliday junction branch migration complex subunit RuvA (213 aa).

Positions 1 to 63 are domain I; it reads MISFLRGTVA…EDSMTLFGFA (63 aa). A domain II region spans residues 64 to 140; the sequence is DDDEREVFEV…LVPHGTAPAA (77 aa). Positions 140–144 are flexible linker; that stretch reads AATTA. The segment at 145-213 is domain III; sequence AEASWKPQVV…RAGNRVGSRG (69 aa).

The protein belongs to the RuvA family. As to quaternary structure, homotetramer. Forms an RuvA(8)-RuvB(12)-Holliday junction (HJ) complex. HJ DNA is sandwiched between 2 RuvA tetramers; dsDNA enters through RuvA and exits via RuvB. An RuvB hexamer assembles on each DNA strand where it exits the tetramer. Each RuvB hexamer is contacted by two RuvA subunits (via domain III) on 2 adjacent RuvB subunits; this complex drives branch migration. In the full resolvosome a probable DNA-RuvA(4)-RuvB(12)-RuvC(2) complex forms which resolves the HJ.

It localises to the cytoplasm. In terms of biological role, the RuvA-RuvB-RuvC complex processes Holliday junction (HJ) DNA during genetic recombination and DNA repair, while the RuvA-RuvB complex plays an important role in the rescue of blocked DNA replication forks via replication fork reversal (RFR). RuvA specifically binds to HJ cruciform DNA, conferring on it an open structure. The RuvB hexamer acts as an ATP-dependent pump, pulling dsDNA into and through the RuvAB complex. HJ branch migration allows RuvC to scan DNA until it finds its consensus sequence, where it cleaves and resolves the cruciform DNA. The polypeptide is Holliday junction branch migration complex subunit RuvA (Pseudarthrobacter chlorophenolicus (strain ATCC 700700 / DSM 12829 / CIP 107037 / JCM 12360 / KCTC 9906 / NCIMB 13794 / A6) (Arthrobacter chlorophenolicus)).